The primary structure comprises 661 residues: Zinc finger protein 81 (661 aa).

The KRAB domain maps to 21–92 (VSFEDVTVDF…EGEAPHQSCS (72 aa)). K266 is covalently cross-linked (Glycyl lysine isopeptide (Lys-Gly) (interchain with G-Cter in SUMO2)). C2H2-type zinc fingers lie at residues 330 to 352 (YICT…EKTH), 358 to 380 (YKCN…QTTH), 386 to 408 (FECS…QKIH), 414 to 436 (HKCS…QRIH), 442 to 464 (YICT…QRIH), 470 to 492 (YECS…KRIH), 498 to 520 (YICT…QKSH), 526 to 548 (YICA…QTIH), 554 to 576 (YVCA…QRIH), 582 to 604 (YKCP…QRIH), 610 to 632 (YICA…QTIH), and 638 to 660 (YKCS…RNIH).

This sequence belongs to the krueppel C2H2-type zinc-finger protein family.

The protein resides in the nucleus. In terms of biological role, may be involved in transcriptional regulation. The protein is Zinc finger protein 81 (ZNF81) of Homo sapiens (Human).